The chain runs to 66 residues: Photosystem II reaction center protein J (66 aa).

A helical membrane pass occupies residues 37–57 (LWLVATAGGMAVLFVVGLFFY).

This sequence belongs to the PsbJ family. PSII is composed of 1 copy each of membrane proteins PsbA, PsbB, PsbC, PsbD, PsbE, PsbF, PsbH, PsbI, PsbJ, PsbK, PsbL, PsbM, PsbT, PsbX, PsbY, PsbZ, Psb30/Ycf12, peripheral proteins PsbO, CyanoQ (PsbQ), PsbU, PsbV and a large number of cofactors. It forms dimeric complexes.

The protein localises to the cellular thylakoid membrane. In terms of biological role, one of the components of the core complex of photosystem II (PSII). PSII is a light-driven water:plastoquinone oxidoreductase that uses light energy to abstract electrons from H(2)O, generating O(2) and a proton gradient subsequently used for ATP formation. It consists of a core antenna complex that captures photons, and an electron transfer chain that converts photonic excitation into a charge separation. The sequence is that of Photosystem II reaction center protein J from Synechococcus sp. (strain WH7803).